The following is a 295-amino-acid chain: Inositol polyphosphate multikinase IPK2 (295 aa).

Positions 1–21 (MASDLRPPEHQVAGHRASADK) are disordered.

It belongs to the inositol phosphokinase (IPK) family.

It carries out the reaction 1D-myo-inositol 1,4,5-trisphosphate + 2 ATP = 1D-myo-inositol 1,3,4,5,6-pentakisphosphate + 2 ADP + 2 H(+). The enzyme catalyses 1D-myo-inositol 1,3,4,6-tetrakisphosphate + ATP = 1D-myo-inositol 1,3,4,5,6-pentakisphosphate + ADP + H(+). Functionally, inositol phosphate kinase with a broad substrate specificity. Phosphorylates inositol 1,4,5-trisphosphate (Ins(1,4,5)P3), inositol 1,4,5,6-tetrakisphosphate (Ins(1,4,5,6)P4), inositol 1,3,4,5-tetrakisphosphate (Ins(1,3,4,5)P4), inositol 1,3,4,6-tetrakisphosphate (Ins(1,3,4,6)P4) and inositol 1,2,3,4,6-pentakisphosphate (Ins(1,2,3,4,6)P5) but not inositol 1,4-bisphosphate (Ins(1,4)P2), inositol 1,3,4-trisphosphate (Ins(1,3,4)P3), inositol 1,2,6-trisphosphate (Ins(1,2,6)P3), inositol 3,4,5,6-tetrakisphosphate (Ins(3,4,5,6)P4), inositol 1,3,4,5,6-pentakisphosphate (Ins(1,3,4,5,6)P5), inositol 1,2,4,5,6-pentakisphosphate (Ins(1,2,4,5,6)P5) or inositol hexakisphosphate (InsP6). Regulates pollen and root development probably through the regulation of InsP3-mediated calcium accumulation. The polypeptide is Inositol polyphosphate multikinase IPK2 (Oryza sativa subsp. indica (Rice)).